We begin with the raw amino-acid sequence, 1137 residues long: Nonsense-mediated mRNA decay factor SMG7 (1137 aa).

Serine 2 bears the N-acetylserine mark. TPR repeat units lie at residues glutamine 152 to asparagine 185 and glutamine 187 to phenylalanine 219. Phosphoserine is present on serine 520. A compositionally biased stretch (basic and acidic residues) spans glutamate 620 to lysine 631. Disordered regions lie at residues glutamate 620–phenylalanine 646, leucine 696–alanine 794, isoleucine 890–methionine 911, proline 988–glycine 1055, serine 1069–glutamate 1089, and serine 1104–histidine 1137. Threonine 624 bears the Phosphothreonine mark. 2 stretches are compositionally biased toward polar residues: residues proline 633–phenylalanine 646 and leucine 696–arginine 722. Residues proline 723–serine 770 are compositionally biased toward low complexity. A phosphoserine mark is found at serine 781 and serine 897. Residues proline 988–threonine 998 show a composition bias toward polar residues. Residues proline 999–proline 1025 are compositionally biased toward low complexity. The segment covering aspartate 1036–lysine 1050 has biased composition (basic and acidic residues). Polar residues predominate over residues serine 1069–tryptophan 1081. Residues glutamine 1117–glycine 1131 show a composition bias toward low complexity.

In terms of assembly, part of a complex that contains SMG5, SMG7, PPP2CA, a short isoform of UPF3A (isoform UPF3AS, but not isoform UPF3AL) and phosphorylated UPF1. Interacts with DHX34; the interaction is RNA-independent.

Its subcellular location is the cytoplasm. It is found in the nucleus. In terms of biological role, plays a role in nonsense-mediated mRNA decay. Recruits UPF1 to cytoplasmic mRNA decay bodies. Together with SMG5 is thought to provide a link to the mRNA degradation machinery involving exonucleolytic pathways, and to serve as an adapter for UPF1 to protein phosphatase 2A (PP2A), thereby triggering UPF1 dephosphorylation. The sequence is that of Nonsense-mediated mRNA decay factor SMG7 from Homo sapiens (Human).